The chain runs to 886 residues: Interference hedgehog (886 aa).

Positions 1–20 (MTLLTSSLLLFSLLTSRLEA) are cleaved as a signal peptide. The Extracellular segment spans residues 21–709 (IPVLEKSPAH…ETFNMSPMLT (689 aa)). Residues 29 to 38 (AHPAHSAHPA) show a composition bias toward low complexity. Residues 29-52 (AHPAHSAHPAHPAHPAHPAHPSPG) form a disordered region. Ig-like C2-type domains follow at residues 51-148 (PGVR…IARL), 138-238 (PLVV…ERIQ), 258-346 (PHLL…YIKV), and 352-438 (PQIV…LQVN). Disulfide bonds link cysteine 74–cysteine 132, cysteine 179–cysteine 226, cysteine 282–cysteine 330, and cysteine 373–cysteine 420. N-linked (GlcNAc...) asparagine glycosylation is found at asparagine 108 and asparagine 215. The interval 432-475 (GTLLQVNPKQIQEPRESGGTHRPKPNQGSRQKQMYPPTPPNVTR) is disordered. 2 consecutive Fibronectin type-III domains span residues 467 to 573 (PPTP…LQPG) and 581 to 676 (VPEL…TQRP). Asparagine 472 carries N-linked (GlcNAc...) asparagine glycosylation. Heparin contacts are provided by arginine 503, lysine 507, lysine 509, and arginine 547. N-linked (GlcNAc...) asparagine glycosylation is present at asparagine 563. The segment at 668 to 697 (LKQGRTQRPKTSTTEEPTLQMGDRDTTTPS) is disordered. Residues 671–684 (GRTQRPKTSTTEEP) show a composition bias toward polar residues. Residue asparagine 699 is glycosylated (N-linked (GlcNAc...) asparagine). Residues 710 to 730 (GTIGGGAVLILLLISTCFCVC) traverse the membrane as a helical segment. At 731–886 (RRRNSRSRGN…SSGSLNSVGV (156 aa)) the chain is on the cytoplasmic side. 2 disordered regions span residues 734 to 768 (NSRS…QRQR) and 781 to 886 (QQQQ…SVGV). Low complexity-rich tracts occupy residues 829 to 843 (RAGG…NNNN) and 870 to 886 (SSRS…SVGV).

It belongs to the immunoglobulin superfamily. IHOG family. In terms of assembly, homodimer. Heterotetramer; 2 iHog chains bind 2 hh chains when facilitated by heparin, heparin is required to promote high-affinity interactions between hh and iHog.

Its subcellular location is the membrane. Mediates response to the active Hedgehog (Hh) protein signal in embryos, functioning upstream or at the level of patched (ptc). The sequence is that of Interference hedgehog (ihog) from Drosophila melanogaster (Fruit fly).